The primary structure comprises 590 residues: Arginine--tRNA ligase (590 aa).

Residues 131–141 (PNIAKEMHVGH) carry the 'HIGH' region motif.

Belongs to the class-I aminoacyl-tRNA synthetase family. In terms of assembly, monomer.

It localises to the cytoplasm. It carries out the reaction tRNA(Arg) + L-arginine + ATP = L-arginyl-tRNA(Arg) + AMP + diphosphate. The polypeptide is Arginine--tRNA ligase (Synechococcus sp. (strain RCC307)).